A 463-amino-acid chain; its full sequence is ATP synthase subunit beta (463 aa).

152-159 serves as a coordination point for ATP; sequence GGAGVGKT.

The protein belongs to the ATPase alpha/beta chains family. In terms of assembly, F-type ATPases have 2 components, CF(1) - the catalytic core - and CF(0) - the membrane proton channel. CF(1) has five subunits: alpha(3), beta(3), gamma(1), delta(1), epsilon(1). CF(0) has three main subunits: a(1), b(2) and c(9-12). The alpha and beta chains form an alternating ring which encloses part of the gamma chain. CF(1) is attached to CF(0) by a central stalk formed by the gamma and epsilon chains, while a peripheral stalk is formed by the delta and b chains.

It localises to the cell inner membrane. It catalyses the reaction ATP + H2O + 4 H(+)(in) = ADP + phosphate + 5 H(+)(out). Produces ATP from ADP in the presence of a proton gradient across the membrane. The catalytic sites are hosted primarily by the beta subunits. The polypeptide is ATP synthase subunit beta (Shewanella sp. (strain ANA-3)).